The following is a 447-amino-acid chain: NADH-ubiquinone oxidoreductase chain 4 (447 aa).

The next 13 membrane-spanning stretches (helical) occupy residues 28–48 (IFLL…FNYI), 56–76 (MVSY…LMAS), 89–109 (FVFM…SMSV), 110–130 (FMFY…ILGW), 141–161 (VYLL…IFYI), 183–203 (LLYL…LVHL), 213–233 (PVSG…YGLL), 246–266 (YNYW…LVCL), 273–293 (ALIA…LLTM), 298–318 (LTGS…LFCL), 331–351 (LLIN…WFLL), 374–394 (IVSW…FSAA), and 409–431 (YSGV…LHWL).

It belongs to the complex I subunit 4 family.

It is found in the mitochondrion membrane. The catalysed reaction is a ubiquinone + NADH + 5 H(+)(in) = a ubiquinol + NAD(+) + 4 H(+)(out). Core subunit of the mitochondrial membrane respiratory chain NADH dehydrogenase (Complex I) that is believed to belong to the minimal assembly required for catalysis. Complex I functions in the transfer of electrons from NADH to the respiratory chain. The immediate electron acceptor for the enzyme is believed to be ubiquinone. In Anopheles gambiae (African malaria mosquito), this protein is NADH-ubiquinone oxidoreductase chain 4 (mt:ND4).